The chain runs to 825 residues: Endoglucanase C (825 aa).

The N-terminal stretch at 1 to 28 (MRNKLRRLLAIMMAVLLITSLFAPMVSA) is a signal peptide. The Proton donor role is filled by glutamate 219. Glutamate 335 (nucleophile) is an active-site residue. A compositionally biased stretch (basic and acidic residues) spans 607–621 (DRESVPEPVEHDTKG). Residues 607-635 (DRESVPEPVEHDTKGDSALPSDFEDGTRQ) form a disordered region.

This sequence belongs to the glycosyl hydrolase 5 (cellulase A) family.

It catalyses the reaction Endohydrolysis of (1-&gt;4)-beta-D-glucosidic linkages in cellulose, lichenin and cereal beta-D-glucans.. This is Endoglucanase C (celC) from Evansella cellulosilytica (strain ATCC 21833 / DSM 2522 / FERM P-1141 / JCM 9156 / N-4) (Bacillus cellulosilyticus).